The primary structure comprises 102 residues: Integration host factor subunit alpha (102 aa).

The interval 49–70 (FGNFQLRTKPQRPGRNPKTGEE) is disordered.

Belongs to the bacterial histone-like protein family. Heterodimer of an alpha and a beta chain.

Its function is as follows. This protein is one of the two subunits of integration host factor, a specific DNA-binding protein that functions in genetic recombination as well as in transcriptional and translational control. The sequence is that of Integration host factor subunit alpha from Nitrosomonas europaea (strain ATCC 19718 / CIP 103999 / KCTC 2705 / NBRC 14298).